The sequence spans 212 residues: Probable GH family 25 lysozyme 2 (212 aa).

A signal peptide spans Met-1–Ala-19. The Ch-type lysozyme domain maps to Ile-20–Pro-212. Active-site residues include Asp-24, Asp-112, and Glu-114.

The protein belongs to the glycosyl hydrolase 25 family.

It localises to the secreted. The catalysed reaction is Hydrolysis of (1-&gt;4)-beta-linkages between N-acetylmuramic acid and N-acetyl-D-glucosamine residues in a peptidoglycan and between N-acetyl-D-glucosamine residues in chitodextrins.. This is Probable GH family 25 lysozyme 2 from Dictyostelium discoideum (Social amoeba).